A 190-amino-acid polypeptide reads, in one-letter code: 3-isopropylmalate dehydratase small subunit (190 aa).

The protein belongs to the LeuD family. LeuD type 1 subfamily. In terms of assembly, heterodimer of LeuC and LeuD.

The enzyme catalyses (2R,3S)-3-isopropylmalate = (2S)-2-isopropylmalate. It participates in amino-acid biosynthesis; L-leucine biosynthesis; L-leucine from 3-methyl-2-oxobutanoate: step 2/4. Functionally, catalyzes the isomerization between 2-isopropylmalate and 3-isopropylmalate, via the formation of 2-isopropylmaleate. The polypeptide is 3-isopropylmalate dehydratase small subunit (Staphylococcus aureus (strain JH1)).